A 123-amino-acid polypeptide reads, in one-letter code: Large ribosomal subunit protein mL52 (123 aa).

The N-terminal 23 residues, 1–23 (MAALGTVLFTGVRRLHCSVAAWA), are a transit peptide targeting the mitochondrion. A compositionally biased stretch (basic and acidic residues) spans 99–109 (QEEQRKQENAL). A disordered region spans residues 99 to 123 (QEEQRKQENALKPKGASLKSPLPSQ).

This sequence belongs to the mitochondrion-specific ribosomal protein mL52 family. In terms of assembly, component of the mitochondrial large ribosomal subunit (mt-LSU). Mature mammalian 55S mitochondrial ribosomes consist of a small (28S) and a large (39S) subunit. The 28S small subunit contains a 12S ribosomal RNA (12S mt-rRNA) and 30 different proteins. The 39S large subunit contains a 16S rRNA (16S mt-rRNA), a copy of mitochondrial valine transfer RNA (mt-tRNA(Val)), which plays an integral structural role, and 52 different proteins. mL52 connects the central protuberance to the body of the ribosome.

The protein resides in the mitochondrion. This Homo sapiens (Human) protein is Large ribosomal subunit protein mL52 (MRPL52).